Reading from the N-terminus, the 272-residue chain is Acidic leucine-rich nuclear phosphoprotein 32 family member B (272 aa).

4 LRR repeats span residues 18-38 (AVRELVLDNCKAMDGKIEGLT), 43-64 (NLEFLSLISVGLFSVSDLPKLP), 65-87 (KLKKLELSENRIFGGLDRLAEEL), and 89-110 (SLTHLNLSGNNLKDISTLEPLK). Residues 123–161 (CEVTNRSDYRETVFRLLPQLSYLDGYDREDQEAPDSDVE) form the LRRCT domain. The segment covering 149-254 (DREDQEAPDS…DEDEDEEEEE (106 aa)) has biased composition (acidic residues). The tract at residues 149-272 (DREDQEAPDS…RETDDEGEDD (124 aa)) is disordered. S164 and S171 each carry phosphoserine. The span at 255-265 (SGKGEKRKRET) shows a compositional bias: basic and acidic residues. Residues 260-263 (KRKR) carry the Nuclear localization signal motif. At T265 the chain carries Phosphothreonine.

Belongs to the ANP32 family. As to quaternary structure, interacts with histones H3 and H4. Interacts with KLF5; this interaction induces promoter region-specific histone incorporation and inhibition of histone acetylation by ANP32B. Some glutamate residues are glycylated by TTLL8. This modification occurs exclusively on glutamate residues and results in a glycine chain on the gamma-carboxyl group. In terms of processing, directly cleaved by caspase-3/CASP3.

Its subcellular location is the nucleus. Multifunctional protein that is involved in the regulation of many processes including cell proliferation, apoptosis, cell cycle progression or transcription. Regulates the proliferation of neuronal stem cells, differentiation of leukemic cells and progression from G1 to S phase of the cell cycle. As negative regulator of caspase-3-dependent apoptosis, may act as an antagonist of ANP32A in regulating tissue homeostasis. Exhibits histone chaperone properties, able to recruit histones to certain promoters, thus regulating the transcription of specific genes. Also plays an essential role in the nucleocytoplasmic transport of specific mRNAs via the uncommon nuclear mRNA export receptor XPO1/CRM1. Participates in the regulation of adequate adaptive immune responses by acting on mRNA expression and cell proliferation. The protein is Acidic leucine-rich nuclear phosphoprotein 32 family member B (Anp32b) of Mus musculus (Mouse).